Reading from the N-terminus, the 308-residue chain is UDP-N-acetylenolpyruvoylglucosamine reductase (308 aa).

Positions 22–185 (RVGGPADWLF…VEAAFRADAG (164 aa)) constitute an FAD-binding PCMH-type domain. The active site involves R165. Over residues 197–211 (QIARRDSSQPTRDRS) the composition is skewed to basic and acidic residues. Positions 197-228 (QIARRDSSQPTRDRSAGSTFRNPAGFSSTGRA) are disordered. Polar residues predominate over residues 212-226 (AGSTFRNPAGFSSTG). S214 functions as the Proton donor in the catalytic mechanism. E296 is a catalytic residue.

The protein belongs to the MurB family. The cofactor is FAD.

Its subcellular location is the cytoplasm. The catalysed reaction is UDP-N-acetyl-alpha-D-muramate + NADP(+) = UDP-N-acetyl-3-O-(1-carboxyvinyl)-alpha-D-glucosamine + NADPH + H(+). Its pathway is cell wall biogenesis; peptidoglycan biosynthesis. Cell wall formation. This is UDP-N-acetylenolpyruvoylglucosamine reductase from Cereibacter sphaeroides (strain ATCC 17025 / ATH 2.4.3) (Rhodobacter sphaeroides).